Here is a 445-residue protein sequence, read N- to C-terminus: MHGHNRNGQAHVPRRKRRNRFVKKNGQCNVYFANLSNKSQRYMADIFTTCVDTRWRYMLMIFSAAFLVSWLFFGLLFWWIAFFHGDLEASPSVPAVGGPGGNGGESPNAPKPCIMHVNGFLGAFLFSVETQTTIGYGFRCVTEECPLAVIAVVVQSIVGCVIDSFMIGTIMAKMARPKKRAQTLLFSHHAVISVRDGKLCLMWRVGNLRKSHIVEAHVRAQLIKPYMTQEGEYLPLDQRDLNVGYDIGLDRIFLVSPIIIVHEIDEDSPLYGMGKEELESEDFEIVVILEGMVEATAMTTQARSSYLASEILWGHRFEPVVFEEKSHYKVDYSRFHKTYEVAGTPCCSARELQESKITVLPAPPPPPSAFCYENELALMSQEEEEMEEEAAAAAAVAAGLGLEAGSKEEAGIIRMLEFGSHLDLERMQAATLPLDNISYRRESRI.

At 1-55 the chain is on the cytoplasmic side; the sequence is MHGHNRNGQAHVPRRKRRNRFVKKNGQCNVYFANLSNKSQRYMADIFTTCVDTRW. A helical transmembrane segment spans residues 56–80; it reads RYMLMIFSAAFLVSWLFFGLLFWWI. The Extracellular segment spans residues 81–119; sequence AFFHGDLEASPSVPAVGGPGGNGGESPNAPKPCIMHVNG. An intramembrane region (helical; Pore-forming) is located at residues 120-131; the sequence is FLGAFLFSVETQ. An intramembrane region (pore-forming) is located at residues 132–138; sequence TTIGYGF. The short motif at 133–138 is the Selectivity filter element; it reads TIGYGF. Residues 139 to 147 are Extracellular-facing; it reads RCVTEECPL. Residues 148-169 traverse the membrane as a helical segment; it reads AVIAVVVQSIVGCVIDSFMIGT. At 170-445 the chain is on the cytoplasmic side; sequence IMAKMARPKK…NISYRRESRI (276 aa). The PDZ-binding motif lies at 443–445; that stretch reads SRI.

It belongs to the inward rectifier-type potassium channel (TC 1.A.2.1) family. KCNJ4 subfamily. Homomultimeric and heteromultimeric association with KCNJ2 and KCNJ12. Interacts with DLG2 and DLG4. Associates, via its PDZ-recognition domain, with a complex containing LIN7A, LIN7B, LIN7C, DLG1, CASK and APBA1. Interacts with TAX1BP3. TAX1BP3 competes with LIN7 family members for KCNJ4 binding. In terms of tissue distribution, highly expressed in the forebrain, moderately in skeletal muscle. Im olfactory bulb, specifically expressed at the postsynaptic membrane of dendritic spines of granule cells.

The protein localises to the cell membrane. It is found in the postsynaptic cell membrane. Its subcellular location is the cytoplasmic vesicle membrane. It carries out the reaction K(+)(in) = K(+)(out). Functionally, inward rectifier potassium channels are characterized by a greater tendency to allow potassium to flow into the cell rather than out of it. Their voltage dependence is regulated by the concentration of extracellular potassium; as external potassium is raised, the voltage range of the channel opening shifts to more positive voltages. The inward rectification is mainly due to the blockage of outward current by internal magnesium. Can be blocked by extracellular barium and cesium. This Mus musculus (Mouse) protein is Inward rectifier potassium channel 4 (Kcnj4).